A 613-amino-acid chain; its full sequence is tRNA 5-methylaminomethyl-2-thiouridine biosynthesis bifunctional protein MnmC (613 aa).

Positions 1–225 (MKKAKLIFKD…KREMIKAYLE (225 aa)) are tRNA (mnm(5)s(2)U34)-methyltransferase. Positions 252-613 (IGAGISSAVL…FLIRKLKKGL (362 aa)) are FAD-dependent cmnm(5)s(2)U34 oxidoreductase.

It in the N-terminal section; belongs to the methyltransferase superfamily. tRNA (mnm(5)s(2)U34)-methyltransferase family. This sequence in the C-terminal section; belongs to the DAO family. The cofactor is FAD.

Its subcellular location is the cytoplasm. The enzyme catalyses 5-aminomethyl-2-thiouridine(34) in tRNA + S-adenosyl-L-methionine = 5-methylaminomethyl-2-thiouridine(34) in tRNA + S-adenosyl-L-homocysteine + H(+). Functionally, catalyzes the last two steps in the biosynthesis of 5-methylaminomethyl-2-thiouridine (mnm(5)s(2)U) at the wobble position (U34) in tRNA. Catalyzes the FAD-dependent demodification of cmnm(5)s(2)U34 to nm(5)s(2)U34, followed by the transfer of a methyl group from S-adenosyl-L-methionine to nm(5)s(2)U34, to form mnm(5)s(2)U34. This Campylobacter jejuni subsp. jejuni serotype O:6 (strain 81116 / NCTC 11828) protein is tRNA 5-methylaminomethyl-2-thiouridine biosynthesis bifunctional protein MnmC.